The primary structure comprises 180 residues: NADH-quinone oxidoreductase subunit I (180 aa).

4Fe-4S ferredoxin-type domains follow at residues 50 to 80 (LTRDPDGEERCVACNLCAVACPVGCISLQKT) and 90 to 119 (EFFRINFSRCIFCGLCEEACPTTAIQLTPD). 8 residues coordinate [4Fe-4S] cluster: cysteine 60, cysteine 63, cysteine 66, cysteine 70, cysteine 99, cysteine 102, cysteine 105, and cysteine 109.

This sequence belongs to the complex I 23 kDa subunit family. NDH-1 is composed of 13 different subunits. Subunits NuoA, H, J, K, L, M, N constitute the membrane sector of the complex. [4Fe-4S] cluster is required as a cofactor.

Its subcellular location is the cell inner membrane. It catalyses the reaction a quinone + NADH + 5 H(+)(in) = a quinol + NAD(+) + 4 H(+)(out). NDH-1 shuttles electrons from NADH, via FMN and iron-sulfur (Fe-S) centers, to quinones in the respiratory chain. The immediate electron acceptor for the enzyme in this species is believed to be ubiquinone. Couples the redox reaction to proton translocation (for every two electrons transferred, four hydrogen ions are translocated across the cytoplasmic membrane), and thus conserves the redox energy in a proton gradient. This Shigella dysenteriae serotype 1 (strain Sd197) protein is NADH-quinone oxidoreductase subunit I.